Consider the following 67-residue polypeptide: Kappa-scoloptoxin(04)-Ssd1b (67 aa).

The first 24 residues, 1–24, serve as a signal peptide directing secretion; the sequence is MKKTCVVSVFLVLLLLKFHDLSMG. Positions 25–36 are excised as a propeptide; the sequence is EEISPLKKVARR. 2 disulfide bridges follow: cysteine 44/cysteine 55 and cysteine 49/cysteine 62.

In terms of tissue distribution, expressed by the venom gland.

The protein resides in the secreted. The chain is Kappa-scoloptoxin(04)-Ssd1b from Scolopendra dehaani (Thai centipede).